Here is a 73-residue protein sequence, read N- to C-terminus: Beta-defensin 50 (73 aa).

The signal sequence occupies residues 1–23; sequence MKTLCFLLLTSGLLYLMVKGVGS. Disulfide bonds link Cys-34/Cys-63 and Cys-46/Cys-64.

This sequence belongs to the beta-defensin family. As to expression, highly expressed in prostate. Not expressed in uterus, epididymis, ovary, testis, spleen, submaxillary gland, thymus, thyroid, pancreas, smooth muscle, skeletal muscle, heart, kidney, lung, liver, eye and brain.

It localises to the secreted. In terms of biological role, has bactericidal activity. This chain is Beta-defensin 50 (Defb50), found in Mus musculus (Mouse).